The sequence spans 78 residues: U23-theraphotoxin-Cg1a 1 (78 aa).

Positions 1 to 21 (MKTSVLVTVLGLAVISVLCSA) are cleaved as a signal peptide. Positions 22–49 (SQDEEQDMYDELLSAVFEVNDELQSEAR) are excised as a propeptide. Intrachain disulfides connect cysteine 50/cysteine 64, cysteine 57/cysteine 69, and cysteine 63/cysteine 75.

It belongs to the neurotoxin 10 (Hwtx-1) family. 64 (Jztx-20) subfamily. Expressed by the venom gland.

It is found in the secreted. In terms of biological role, probable ion channel inhibitor. The polypeptide is U23-theraphotoxin-Cg1a 1 (Chilobrachys guangxiensis (Chinese earth tiger tarantula)).